A 141-amino-acid chain; its full sequence is Galactose-6-phosphate isomerase subunit LacA 1 (141 aa).

Belongs to the LacAB/RpiB family. As to quaternary structure, heteromultimeric protein consisting of LacA and LacB.

It carries out the reaction aldehydo-D-galactose 6-phosphate = keto-D-tagatose 6-phosphate. It functions in the pathway carbohydrate metabolism; D-galactose 6-phosphate degradation; D-tagatose 6-phosphate from D-galactose 6-phosphate: step 1/1. The protein is Galactose-6-phosphate isomerase subunit LacA 1 of Streptococcus pyogenes serotype M6 (strain ATCC BAA-946 / MGAS10394).